The primary structure comprises 421 residues: Serine/threonine-protein kinase OXI1 (421 aa).

The 313-residue stretch at 17–329 folds into the Protein kinase domain; sequence LEVLSLLGRG…VEEIKGHDFF (313 aa). Residues 23–31 and K45 contribute to the ATP site; that span reads LGRGAKGVV. Catalysis depends on D149, which acts as the Proton acceptor. Residues 167–246 form an activation loop region; sequence DFDLSTNLAP…VGTEEYVAPE (80 aa). S235 carries the post-translational modification Phosphoserine; by PDPK1. The AGC-kinase C-terminal domain maps to 330-421; that stretch reads RGVDWEKVIL…LESDNNFLVF (92 aa). The PIF motif lies at 418–421; that stretch reads FLVF.

It belongs to the protein kinase superfamily. AGC Ser/Thr protein kinase family. Interacts with PDK1 and PDK2. In terms of tissue distribution, expressed in roots and root hair cells.

It catalyses the reaction L-seryl-[protein] + ATP = O-phospho-L-seryl-[protein] + ADP + H(+). The catalysed reaction is L-threonyl-[protein] + ATP = O-phospho-L-threonyl-[protein] + ADP + H(+). Its activity is regulated as follows. Activated in response to hydrogen peroxide and cellulase elicitor. Activated by PDK1 in a phosphatidic acid dependent manner. Involved in oxidative burst-mediated signaling. Required for basal resistance to P.parasitica infection and root hair growth. Partly required for the activation of MPK3 and MPK6 by hydrogen peroxide and cellulase elicitor. In Arabidopsis thaliana (Mouse-ear cress), this protein is Serine/threonine-protein kinase OXI1.